The primary structure comprises 356 residues: Zinc finger protein 830 (356 aa).

A coiled-coil region spans residues 11–33; sequence AQEELRKLMKAKQRESSSKKRIE. A C2H2-type zinc finger spans residues 47–69; sequence CVVCNSLIKSELLWPAHILGKQH. Residues 71-195 form a disordered region; that stretch reads EKVAELKGTK…PTSSADNLPA (125 aa). A compositionally biased stretch (polar residues) spans 80-90; the sequence is KATTSSPSNTI. Composition is skewed to basic and acidic residues over residues 99 to 118 and 125 to 135; these read KGSE…EDHP and LPEEFFEKEKT. Positions 150–165 are enriched in acidic residues; that stretch reads DYEDVDDDDAEEGEEY. The stretch at 278–322 forms a coiled coil; sequence AEEDEEGRLDRQIDEIDEQIQCYRRVEHLRDRKDTLQDAKMEVLK.

It localises to the nucleus. The protein resides in the chromosome. Its subcellular location is the nucleus speckle. Functionally, may act as an important regulator of the cell cycle that participates in the maintenance of genome integrity. This chain is Zinc finger protein 830, found in Xenopus laevis (African clawed frog).